Reading from the N-terminus, the 431-residue chain is MIERVKGTRDFLPEEMVKRRWVFEKIREVFETYGFKEVLTPVMEYTKLFQLRSGEEVVKQLYAFKDKGGRDVALRPDMTSSVARLYVNSFQTAPKPIKWYYIANMFRYEEPQSGRYREFWQAGVELIGSDKIEADAEVIALFVDSYLSTGLKDFTVNIGDRVLLDEFAKMLGVKDDIGLMRIIDKKDKLSQEEFLKALGEFGLDENGIEKVLNLIEIKGKPDDVLPLAEELFTSERAKEEISRLYNLVDILSWYEVDEWIQIDLGIARGFDYYTSIVFEAIVPNDLGIGSIGGGGRYDNLIEVFGGKPTPATGFAIGIERLIPILEWKGLLPELKAGPDVFVIPVGDSRDVATAIVTRLRKAGIRSDIELSGRKLRKALDYANRIGVRLSIIVGKRDLERGVVTIRDLESGNQVEVPVDNVVTKVRELLNQ.

It belongs to the class-II aminoacyl-tRNA synthetase family.

The protein resides in the cytoplasm. It catalyses the reaction tRNA(His) + L-histidine + ATP = L-histidyl-tRNA(His) + AMP + diphosphate + H(+). In Pyrococcus abyssi (strain GE5 / Orsay), this protein is Histidine--tRNA ligase (hisS).